The chain runs to 422 residues: Glutamate-1-semialdehyde 2,1-aminomutase (422 aa).

Lys258 carries the N6-(pyridoxal phosphate)lysine modification.

It belongs to the class-III pyridoxal-phosphate-dependent aminotransferase family. HemL subfamily. As to quaternary structure, homodimer. Pyridoxal 5'-phosphate serves as cofactor.

It localises to the cytoplasm. It carries out the reaction (S)-4-amino-5-oxopentanoate = 5-aminolevulinate. It functions in the pathway porphyrin-containing compound metabolism; protoporphyrin-IX biosynthesis; 5-aminolevulinate from L-glutamyl-tRNA(Glu): step 2/2. This Chlamydia trachomatis serovar L2 (strain ATCC VR-902B / DSM 19102 / 434/Bu) protein is Glutamate-1-semialdehyde 2,1-aminomutase.